A 278-amino-acid chain; its full sequence is 3-methyl-2-oxobutanoate hydroxymethyltransferase (278 aa).

Mg(2+) is bound by residues D52 and D91. 3-methyl-2-oxobutanoate contacts are provided by residues 52–53, D91, and K121; that span reads DS. E123 is a Mg(2+) binding site. E190 (proton acceptor) is an active-site residue.

Belongs to the PanB family. As to quaternary structure, homodecamer; pentamer of dimers. The cofactor is Mg(2+).

It localises to the cytoplasm. It carries out the reaction 3-methyl-2-oxobutanoate + (6R)-5,10-methylene-5,6,7,8-tetrahydrofolate + H2O = 2-dehydropantoate + (6S)-5,6,7,8-tetrahydrofolate. It participates in cofactor biosynthesis; (R)-pantothenate biosynthesis; (R)-pantoate from 3-methyl-2-oxobutanoate: step 1/2. In terms of biological role, catalyzes the reversible reaction in which hydroxymethyl group from 5,10-methylenetetrahydrofolate is transferred onto alpha-ketoisovalerate to form ketopantoate. This is 3-methyl-2-oxobutanoate hydroxymethyltransferase from Rhodospirillum rubrum (strain ATCC 11170 / ATH 1.1.1 / DSM 467 / LMG 4362 / NCIMB 8255 / S1).